The chain runs to 376 residues: Rhodopsin (376 aa).

Over 1-52 (MSSWSNQPAMDDYGLPSSNPYGNFTVVDMAPKDILHMIHPHWYQYPPMNPMM) the chain is Extracellular. Asn-23 is a glycosylation site (N-linked (GlcNAc...) asparagine). The helical transmembrane segment at 53-77 (YPLLLIFMLFTGILCLAGNFVTIWV) threads the bilayer. Topologically, residues 78-89 (FMNTKSLRTPAN) are cytoplasmic. Residues 90-112 (LLVVNLAMSDFLMMFTMFPPMMV) traverse the membrane as a helical segment. Over 113–126 (TCYYHTWTLGPTFC) the chain is Extracellular. Cys-126 and Cys-203 are oxidised to a cystine. The chain crosses the membrane as a helical span at residues 127-149 (QVYAFLGNLCGCASIWTMVFITF). Residues 150-152 (DRY) carry the 'Ionic lock' involved in activated form stabilization motif. Residues 150 to 168 (DRYNVIVKGVAGEPLSTKK) are Cytoplasmic-facing. A helical transmembrane segment spans residues 169–189 (ASLWILTIWVLSITWCIAPFF). The Extracellular portion of the chain corresponds to 190–216 (GWNRYVPEGNLTGCGTDYLSEDILSRS). An N-linked (GlcNAc...) asparagine glycan is attached at Asn-199. The helical transmembrane segment at 217–237 (YLYDYSTWVYYLPLLPIYCYV) threads the bilayer. Residues 238–278 (SIIKAVAAHEKGMRDQAKKMGIKSLRNEEAQKTSAECRLAK) are Cytoplasmic-facing. A helical membrane pass occupies residues 279–300 (IAMTTVALWFIAWTPYLLINWV). The Extracellular segment spans residues 301 to 311 (GMFARSYLSPV). Residues 312-333 (YTIWGYVFAKANAVYNPIVYAI) traverse the membrane as a helical segment. Residue Lys-321 is modified to N6-(retinylidene)lysine. Over 334-376 (SHPKYRAAMEKKLPCLSCKTESDDVSESASTTTSSAEEKAESA) the chain is Cytoplasmic. A disordered region spans residues 353 to 376 (TESDDVSESASTTTSSAEEKAESA).

This sequence belongs to the G-protein coupled receptor 1 family. Opsin subfamily. In terms of assembly, homodimer. Interacts with GNAQ. In terms of processing, contains one covalently linked retinal chromophore. Detected on rhabdomere membranes on photoreceptor cells in the retina (at protein level).

The protein resides in the cell projection. Its subcellular location is the rhabdomere membrane. Functionally, photoreceptor required for image-forming vision at low light intensity. Can use both retinal and 3-dehydroretinal as visual pigment. Light-induced isomerization of 11-cis to all-trans retinal triggers a conformational change that activates signaling via G-proteins. Signaling via GNAQ probably mediates the activation of phospholipase C. The sequence is that of Rhodopsin (RHO) from Procambarus clarkii (Red swamp crayfish).